The sequence spans 765 residues: Myotubularin-related protein 10-A (765 aa).

A Myotubularin phosphatase domain is found at 209–650 (FETYSDWDRE…THIKLWKLCY (442 aa)).

The protein belongs to the protein-tyrosine phosphatase family. Non-receptor class myotubularin subfamily.

This is Myotubularin-related protein 10-A (mtmr10-a) from Xenopus laevis (African clawed frog).